The primary structure comprises 279 residues: Acetylglutamate kinase (279 aa).

Residues 64-65, Arg-86, and Asn-177 contribute to the substrate site; that span reads GG.

Belongs to the acetylglutamate kinase family. ArgB subfamily.

It localises to the cytoplasm. The catalysed reaction is N-acetyl-L-glutamate + ATP = N-acetyl-L-glutamyl 5-phosphate + ADP. It functions in the pathway amino-acid biosynthesis; L-arginine biosynthesis; N(2)-acetyl-L-ornithine from L-glutamate: step 2/4. Its function is as follows. Catalyzes the ATP-dependent phosphorylation of N-acetyl-L-glutamate. The chain is Acetylglutamate kinase from Campylobacter jejuni subsp. jejuni serotype O:2 (strain ATCC 700819 / NCTC 11168).